We begin with the raw amino-acid sequence, 195 residues long: Imidazoleglycerol-phosphate dehydratase (195 aa).

The protein belongs to the imidazoleglycerol-phosphate dehydratase family.

It is found in the cytoplasm. The catalysed reaction is D-erythro-1-(imidazol-4-yl)glycerol 3-phosphate = 3-(imidazol-4-yl)-2-oxopropyl phosphate + H2O. The protein operates within amino-acid biosynthesis; L-histidine biosynthesis; L-histidine from 5-phospho-alpha-D-ribose 1-diphosphate: step 6/9. The sequence is that of Imidazoleglycerol-phosphate dehydratase from Cupriavidus metallidurans (strain ATCC 43123 / DSM 2839 / NBRC 102507 / CH34) (Ralstonia metallidurans).